We begin with the raw amino-acid sequence, 134 residues long: Cytochrome b5 (134 aa).

An N-acetylalanine modification is found at A2. K7, K10, and K19 each carry N6-acetyllysine. Positions 9–85 (VKYYTLEEIQ…SKTFIIGELH (77 aa)) constitute a Cytochrome b5 heme-binding domain. Residues H44 and H68 each coordinate heme. The helical transmembrane segment at 109-131 (WWTNWVIPAISALVVSLMYHFYT) threads the bilayer.

This sequence belongs to the cytochrome b5 family.

It localises to the endoplasmic reticulum membrane. The protein localises to the microsome membrane. It is found in the cytoplasm. Its function is as follows. Cytochrome b5 is a membrane-bound hemoprotein functioning as an electron carrier for several membrane-bound oxygenases. The protein is Cytochrome b5 (CYB5A) of Sus scrofa (Pig).